A 468-amino-acid polypeptide reads, in one-letter code: Putative BTB/POZ domain and WD-repeat protein R154 (468 aa).

The region spanning 14-85 is the BTB domain; that stretch reads SDLQLIVEDS…FYGIDDKLPE (72 aa). WD repeat units lie at residues 194–233, 354–398, and 401–440; these read HHSE…IIFN, DEIG…LVKS, and LFDV…IIYT.

This sequence belongs to the mimivirus BTB/WD family.

This Acanthamoeba polyphaga (Amoeba) protein is Putative BTB/POZ domain and WD-repeat protein R154.